Here is a 216-residue protein sequence, read N- to C-terminus: ATP-dependent Clp protease proteolytic subunit (216 aa).

Residue Ser-109 is the Nucleophile of the active site. His-134 is an active-site residue.

Belongs to the peptidase S14 family. As to quaternary structure, fourteen ClpP subunits assemble into 2 heptameric rings which stack back to back to give a disk-like structure with a central cavity, resembling the structure of eukaryotic proteasomes.

The protein resides in the cytoplasm. The catalysed reaction is Hydrolysis of proteins to small peptides in the presence of ATP and magnesium. alpha-casein is the usual test substrate. In the absence of ATP, only oligopeptides shorter than five residues are hydrolyzed (such as succinyl-Leu-Tyr-|-NHMec, and Leu-Tyr-Leu-|-Tyr-Trp, in which cleavage of the -Tyr-|-Leu- and -Tyr-|-Trp bonds also occurs).. Its function is as follows. Cleaves peptides in various proteins in a process that requires ATP hydrolysis. Has a chymotrypsin-like activity. Plays a major role in the degradation of misfolded proteins. This is ATP-dependent Clp protease proteolytic subunit from Rhodospirillum rubrum (strain ATCC 11170 / ATH 1.1.1 / DSM 467 / LMG 4362 / NCIMB 8255 / S1).